The chain runs to 95 residues: Small ribosomal subunit protein bS20 (95 aa).

Belongs to the bacterial ribosomal protein bS20 family.

Its function is as follows. Binds directly to 16S ribosomal RNA. In Ehrlichia chaffeensis (strain ATCC CRL-10679 / Arkansas), this protein is Small ribosomal subunit protein bS20.